The following is a 943-amino-acid chain: Isoleucine--tRNA ligase (943 aa).

The 'HIGH' region signature appears at 59 to 69; it reads PYANGQIHLGH. Glu-577 contributes to the L-isoleucyl-5'-AMP binding site. The 'KMSKS' region signature appears at 618–622; sequence KMSKS. Position 621 (Lys-621) interacts with ATP. Zn(2+)-binding residues include Cys-906, Cys-909, Cys-926, and Cys-929.

The protein belongs to the class-I aminoacyl-tRNA synthetase family. IleS type 1 subfamily. As to quaternary structure, monomer. Zn(2+) serves as cofactor.

The protein localises to the cytoplasm. The enzyme catalyses tRNA(Ile) + L-isoleucine + ATP = L-isoleucyl-tRNA(Ile) + AMP + diphosphate. Catalyzes the attachment of isoleucine to tRNA(Ile). As IleRS can inadvertently accommodate and process structurally similar amino acids such as valine, to avoid such errors it has two additional distinct tRNA(Ile)-dependent editing activities. One activity is designated as 'pretransfer' editing and involves the hydrolysis of activated Val-AMP. The other activity is designated 'posttransfer' editing and involves deacylation of mischarged Val-tRNA(Ile). The protein is Isoleucine--tRNA ligase of Xylella fastidiosa (strain M12).